The chain runs to 175 residues: Large ribosomal subunit protein uL10 (175 aa).

The protein belongs to the universal ribosomal protein uL10 family. Part of the ribosomal stalk of the 50S ribosomal subunit. The N-terminus interacts with L11 and the large rRNA to form the base of the stalk. The C-terminus forms an elongated spine to which L12 dimers bind in a sequential fashion forming a multimeric L10(L12)X complex.

In terms of biological role, forms part of the ribosomal stalk, playing a central role in the interaction of the ribosome with GTP-bound translation factors. This Mycobacterium sp. (strain KMS) protein is Large ribosomal subunit protein uL10.